Consider the following 768-residue polypeptide: Gephyrin (768 aa).

Positions 14-166 (QIRVGVLTVS…LPGSKKGSQE (153 aa)) are MPT Mo-transferase. The interval 153–348 (LIINLPGSKK…VDITKVARRH (196 aa)) is interaction with GABARAP. 2 disordered regions span residues 194–245 (DELE…DSSS) and 273–316 (TASL…ASRV). The segment covering 200-212 (PSPPPPLSPPPTT) has biased composition (pro residues). Phosphoserine is present on residues Ser-201 and Ser-207. A Phosphothreonine modification is found at Thr-211. Ser-213 bears the Phosphoserine mark. The S-palmitoyl cysteine moiety is linked to residue Cys-225. Residues 274-299 (ASLSTTPSESPRAQATSRLSTASCPT) show a composition bias toward polar residues. Residue Ser-275 is modified to Phosphoserine. A phosphothreonine mark is found at Thr-278 and Thr-279. Ser-281 and Ser-283 each carry phosphoserine. Residue Cys-297 is the site of S-palmitoyl cysteine attachment. Residues 326 to 768 (SSKENILRAS…VVDVMVIGRL (443 aa)) are MPT adenylyltransferase. Ser-337 bears the Phosphoserine mark.

This sequence in the N-terminal section; belongs to the MoaB/Mog family. It in the C-terminal section; belongs to the MoeA family. As to quaternary structure, homotrimer, homodimer and homooligomer. Interacts with SRGAP2 (via SH3 domain). Interacts with GLRB. Interacts with GABARAP. Interacts with GABRA3. GABRA3 and GLRB occupy overlapping binding sites. Interacts with ARHGAP32; IQSEC3, INSYN1 and INSYN2A. It depends on Mg(2+) as a cofactor. Post-translationally, phosphorylated. Palmitoylated. Palmitoylation is stimulated by GABA type A receptors activity. Palmitoylation by ZDHHC12 regulates clustering at synapses. In terms of tissue distribution, expressed in tissues including spinal cord, brain, liver, kidney and lung.

Its subcellular location is the postsynaptic cell membrane. The protein resides in the cell membrane. The protein localises to the cytoplasm. It localises to the cytosol. It is found in the cytoskeleton. Its subcellular location is the cell projection. The protein resides in the dendrite. The protein localises to the postsynaptic density. It carries out the reaction molybdopterin + ATP + H(+) = adenylyl-molybdopterin + diphosphate. The catalysed reaction is adenylyl-molybdopterin + molybdate = Mo-molybdopterin + AMP + H(+). The protein operates within cofactor biosynthesis; molybdopterin biosynthesis. Its activity is regulated as follows. Inhibited by copper and tungsten. Its function is as follows. Microtubule-associated protein involved in membrane protein-cytoskeleton interactions. It is thought to anchor the inhibitory glycine receptor (GLYR) to subsynaptic microtubules. Acts as a major instructive molecule at inhibitory synapses, where it also clusters GABA type A receptors. Functionally, also has a catalytic activity and catalyzes two steps in the biosynthesis of the molybdenum cofactor. In the first step, molybdopterin is adenylated. Subsequently, molybdate is inserted into adenylated molybdopterin and AMP is released. The polypeptide is Gephyrin (Gphn) (Rattus norvegicus (Rat)).